The primary structure comprises 116 residues: Beta-2-microglobulin (116 aa).

A signal peptide spans 1–19; it reads MRAIITFALFCVLYVTVQG. The region spanning 24–110 is the Ig-like C1-type domain; that stretch reads PKVQVYSHFP…VRHMNNKNIY (87 aa). C44 and C99 form a disulfide bridge.

It belongs to the beta-2-microglobulin family. Heterodimer of an alpha chain and a beta chain. Beta-2-microglobulin is the beta-chain of major histocompatibility complex class I molecules.

The protein resides in the secreted. Component of the class I major histocompatibility complex (MHC). Involved in the presentation of peptide antigens to the immune system. The protein is Beta-2-microglobulin (b2m) of Cyprinus carpio (Common carp).